A 95-amino-acid polypeptide reads, in one-letter code: Co-chaperonin GroES (95 aa).

It belongs to the GroES chaperonin family. In terms of assembly, heptamer of 7 subunits arranged in a ring. Interacts with the chaperonin GroEL.

The protein resides in the cytoplasm. Together with the chaperonin GroEL, plays an essential role in assisting protein folding. The GroEL-GroES system forms a nano-cage that allows encapsulation of the non-native substrate proteins and provides a physical environment optimized to promote and accelerate protein folding. GroES binds to the apical surface of the GroEL ring, thereby capping the opening of the GroEL channel. In Caldicellulosiruptor bescii (strain ATCC BAA-1888 / DSM 6725 / KCTC 15123 / Z-1320) (Anaerocellum thermophilum), this protein is Co-chaperonin GroES.